The sequence spans 119 residues: 5-hydroxyisourate hydrolase (119 aa).

Residues H10, R48, and Y116 each contribute to the substrate site.

The protein belongs to the transthyretin family. 5-hydroxyisourate hydrolase subfamily. Homotetramer.

It carries out the reaction 5-hydroxyisourate + H2O = 5-hydroxy-2-oxo-4-ureido-2,5-dihydro-1H-imidazole-5-carboxylate + H(+). The protein operates within purine metabolism; urate degradation; (S)-allantoin from urate: step 2/3. Catalyzes the hydrolysis of 5-hydroxyisourate (HIU) to 2-oxo-4-hydroxy-4-carboxy-5-ureidoimidazoline (OHCU). The protein is 5-hydroxyisourate hydrolase of Deinococcus radiodurans (strain ATCC 13939 / DSM 20539 / JCM 16871 / CCUG 27074 / LMG 4051 / NBRC 15346 / NCIMB 9279 / VKM B-1422 / R1).